The sequence spans 227 residues: Terpene cyclase ltmB (227 aa).

The next 7 membrane-spanning stretches (helical) occupy residues 20–40 (LAETFVTFMGLGWLINYVLMI), 51–71 (MALIPLCNNIAWELVYTIIYP), 76–96 (VELAAFIAGVTLNFLIMTSAA), 113–133 (AGLIIVAGILMCFTGHVALAM), 135–155 (IGPALAYSWGAVICQLALSIG), 173–195 (LWSSRFLGSCCAVGFAFLRWRYW), and 206–226 (LILWSLATFLVADLTYGVCLL).

It belongs to the paxB family.

The protein localises to the membrane. Its pathway is secondary metabolite biosynthesis. Terpene cyclase; part of the gene cluster that mediates the biosynthesis of lolitrems, indole-diterpene mycotoxins that are potent tremorgens in mammals, and are synthesized by clavicipitaceous fungal endophytes in association with their grass hosts. The geranylgeranyl diphosphate (GGPP) synthase ltmG is proposed to catalyze the first step in lolitrem biosynthesis. LtmG catalyzes a series of iterative condensations of isopentenyl diphosphate (IPP) with dimethylallyl diphosphate (DMAPP), geranyl diphosphate (GPP), and farnesyl diphosphate (FPP), to form GGPP. GGPP then condenses with indole-3-glycerol phosphate to form 3-geranylgeranylindole, an acyclic intermediate, to be incorporated into paxilline. Either ltmG or ltmC could be responsible for this step, as both are putative prenyl transferases. The FAD-dependent monooxygenase ltmM then catalyzes the epoxidation of the two terminal alkenes of the geranylgeranyl moiety, which is subsequently cyclized by ltmB, to paspaline. The cytochrome P450 monooxygenases ltmQ and ltmP can sequentially oxidize paspaline to terpendole E and terpendole F. Alternatively, ltmP converts paspaline to an intermediate which is oxidized by ltmQ to terpendole F. LtmF, ltmK, ltmE and ltmJ appear to be unique to the epichloe endophytes. The prenyltransferase ltmF is involved in the 27-hydroxyl-O-prenylation. The cytochrome P450 monooxygenase ltmK is required for the oxidative acetal ring formation. The multi-functional prenyltransferase ltmE is required for C20- and C21-prenylations of the indole ring of paspalanes and acts together with the cytochrome P450 monooxygenase ltmJ to yield lolitremanes by multiple oxidations and ring closures. The stereoisomer pairs of lolitriol and lolitrem N or lolitrem B and lolitrem F may be attributed to variations in the way in which ring closure can occur under the action of ltmJ. While the major product of this pathway is lolitrem B, the prenyl transferases and cytochrome P450 monooxygenases identified in this pathway have a remarkable versatility in their regio- and stereo-specificities to generate a diverse range of metabolites that are products of a metabolic grid rather than a linear pathway. The polypeptide is Terpene cyclase ltmB (Epichloe festucae var. lolii (Neotyphodium lolii)).